The following is a 319-amino-acid chain: 33 kDa chaperonin (319 aa).

The segment covering 1–10 has biased composition (basic and acidic residues); sequence MTDASGSERL. The disordered stretch occupies residues 1–25; that stretch reads MTDASGSERLKRAKGISEGTPSSLP. 2 disulfides stabilise this stretch: cysteine 261/cysteine 263 and cysteine 294/cysteine 297.

Belongs to the HSP33 family. Post-translationally, under oxidizing conditions two disulfide bonds are formed involving the reactive cysteines. Under reducing conditions zinc is bound to the reactive cysteines and the protein is inactive.

It localises to the cytoplasm. Redox regulated molecular chaperone. Protects both thermally unfolding and oxidatively damaged proteins from irreversible aggregation. Plays an important role in the bacterial defense system toward oxidative stress. This Synechococcus sp. (strain JA-2-3B'a(2-13)) (Cyanobacteria bacterium Yellowstone B-Prime) protein is 33 kDa chaperonin.